We begin with the raw amino-acid sequence, 437 residues long: Probable eukaryotic translation initiation factor 5-2 (437 aa).

29–36 (GKGNGIKT) is a GTP binding site. 2 stretches are compositionally biased toward basic and acidic residues: residues 148 to 179 (EQKK…EQRK) and 191 to 212 (KDSK…HDEN). 2 disordered regions span residues 148-231 (EQKK…WQTD) and 262-284 (EKKA…PPQE). Ser201 carries the post-translational modification Phosphoserine; by CK2. Positions 213–226 (ALEVDEDEDDDDGV) are enriched in acidic residues. Position 230 is a phosphothreonine; by CK2 (Thr230). In terms of domain architecture, W2 spans 278-436 (ENPPPQEKNL…QSAESESEEE (159 aa)). Phosphoserine; by CK2 occurs at positions 428, 431, and 433.

The protein belongs to the eIF-2-beta/eIF-5 family. In terms of processing, phosphorylated at Ser-201, Thr-230, Ser-428, Ser-431, and Ser-433 by CK2.

In terms of biological role, catalyzes the hydrolysis of GTP bound to the 40S ribosomal initiation complex (40S.mRNA.Met-tRNA[F].eIF-2.GTP) with the subsequent joining of a 60S ribosomal subunit resulting in the release of eIF-2 and the guanine nucleotide. The subsequent joining of a 60S ribosomal subunit results in the formation of a functional 80S initiation complex (80S.mRNA.Met-tRNA[F]). This Arabidopsis thaliana (Mouse-ear cress) protein is Probable eukaryotic translation initiation factor 5-2.